Reading from the N-terminus, the 112-residue chain is UPF0342 protein SP_1372 (112 aa).

It belongs to the UPF0342 family.

The polypeptide is UPF0342 protein SP_1372 (Streptococcus pneumoniae serotype 4 (strain ATCC BAA-334 / TIGR4)).